The primary structure comprises 166 residues: Urease accessory protein UreE 2 (166 aa).

A disordered region spans residues 135–154; that stretch reads EHGAYGGGHHHSRAGEEDFN.

This sequence belongs to the UreE family.

The protein localises to the cytoplasm. Its function is as follows. Involved in urease metallocenter assembly. Binds nickel. Probably functions as a nickel donor during metallocenter assembly. The polypeptide is Urease accessory protein UreE 2 (Pseudomonas syringae pv. syringae (strain B728a)).